We begin with the raw amino-acid sequence, 118 residues long: Cell division protein FtsB (118 aa).

The Cytoplasmic portion of the chain corresponds to 1 to 3; that stretch reads MRL. The chain crosses the membrane as a helical span at residues 4 to 21; it reads LFLVLLVLLGLIQYPLWL. Over 22 to 118 the chain is Periplasmic; it reads GKGGWFKVWD…PRPPATPPRR (97 aa). A coiled-coil region spans residues 28 to 62; it reads KVWDLQRQVAEQRETNDGLRARNTALEAEVRDLAT. Residues 88-118 form a disordered region; that stretch reads LPPGTPLPSGNSTPQASALSKPRPPATPPRR. Over residues 95 to 105 the composition is skewed to polar residues; that stretch reads PSGNSTPQASA. The span at 109–118 shows a compositional bias: pro residues; sequence PRPPATPPRR.

Belongs to the FtsB family. In terms of assembly, part of a complex composed of FtsB, FtsL and FtsQ.

Its subcellular location is the cell inner membrane. Functionally, essential cell division protein. May link together the upstream cell division proteins, which are predominantly cytoplasmic, with the downstream cell division proteins, which are predominantly periplasmic. This is Cell division protein FtsB from Bordetella parapertussis (strain 12822 / ATCC BAA-587 / NCTC 13253).